The following is a 258-amino-acid chain: Small ribosomal subunit protein mS23 (258 aa).

Belongs to the mitochondrion-specific ribosomal protein mS23 family. In terms of assembly, component of the mitochondrial small ribosomal subunit.

Its subcellular location is the mitochondrion. This chain is Small ribosomal subunit protein mS23, found in Aspergillus fumigatus (strain CBS 144.89 / FGSC A1163 / CEA10) (Neosartorya fumigata).